Here is a 449-residue protein sequence, read N- to C-terminus: MTHSGQPAPLEARKCQSLIGRVRVPGDKSISHRALILGALAVGETRIAGLLEGEDVLNTAKAMQALGAKVERRIDDKSGIVWSVRGVGTSGFATPEAPLDFGNSGTGCRLVMGAVAGCPIVATFDGDGSLRSRPMRRILDPLELMGARVTGESDGGRLPLTLAGARDPLPIVYRTPVASAQIKSAVLLAGLSAPGITTVIESEASRDHTELMLKHFGAQIVSVSDGTHGRKISLTGQPELHGAAVTVPADPSSAAFPIVAALITEGSDIVLTDVMTNPLRTGLFATLREMGASIEESETRLDAGEPMAQLRVRASKLRGVEVPAARAPSMIDEYLVLAVAAAFAEGTTVMRGLHELRVKESDRLEAAAAMLRVNGVAVEIAGDDLIVEGRGRVPGGGLVTTHMDHRIAMSALAMGCASDAPVKVDDTAFIATSFPDFVPMMRRLGADFA.

Positions 28, 29, and 33 each coordinate 3-phosphoshikimate. K28 serves as a coordination point for phosphoenolpyruvate. Phosphoenolpyruvate-binding residues include G105 and R133. S179, Q181, D332, and K359 together coordinate 3-phosphoshikimate. A phosphoenolpyruvate-binding site is contributed by Q181. D332 serves as the catalytic Proton acceptor. Residues R363 and R406 each coordinate phosphoenolpyruvate.

This sequence belongs to the EPSP synthase family. In terms of assembly, monomer.

The protein resides in the cytoplasm. The enzyme catalyses 3-phosphoshikimate + phosphoenolpyruvate = 5-O-(1-carboxyvinyl)-3-phosphoshikimate + phosphate. It functions in the pathway metabolic intermediate biosynthesis; chorismate biosynthesis; chorismate from D-erythrose 4-phosphate and phosphoenolpyruvate: step 6/7. Its function is as follows. Catalyzes the transfer of the enolpyruvyl moiety of phosphoenolpyruvate (PEP) to the 5-hydroxyl of shikimate-3-phosphate (S3P) to produce enolpyruvyl shikimate-3-phosphate and inorganic phosphate. The protein is 3-phosphoshikimate 1-carboxyvinyltransferase of Nitrobacter hamburgensis (strain DSM 10229 / NCIMB 13809 / X14).